A 328-amino-acid polypeptide reads, in one-letter code: MAHTITPAVESGLGVLTHAVSSTVPVAVLPSLPPGIGSGVPAGAGLLSQIHATSWDPTLSTDWDNEKASQQCILRIKRDIMSIYKEPPPGMFVVPDPHDMTKIHALITGPFDTPYEGGFFLFLFRCPPDYPIHPPRVKLITTGHNTVRFNPNFYRNGKVCLSILGTWTGPAWSPAQSISSVLISIQSLMTENPYHNEPGFEQERHPGDSKNYNECIRHETMRVAVCDMLEGKVSCPEALWSVMEKSFLEYYDFYEGVCKERLHLQGQNMQDPFGEKRGRFDYQGLLTRLRAIQRRLREKCPPEDNDGDSDSDTSSSGTDPDSQGSSQP.

A UBC core domain is found at Q71 to V225. Residue C160 is the Glycyl thioester intermediate of the active site. The tract at residues R295 to P328 is disordered. A compositionally biased stretch (low complexity) spans D312–P328.

The protein belongs to the ubiquitin-conjugating enzyme family.

It is found in the cytoplasm. The protein resides in the nucleus. It carries out the reaction S-ubiquitinyl-[E1 ubiquitin-activating enzyme]-L-cysteine + [E2 ubiquitin-conjugating enzyme]-L-cysteine = [E1 ubiquitin-activating enzyme]-L-cysteine + S-ubiquitinyl-[E2 ubiquitin-conjugating enzyme]-L-cysteine.. It participates in protein modification; protein ubiquitination. Catalyzes the covalent attachment of ubiquitin to other proteins. May be involved in apoptosis regulation. In Danio rerio (Zebrafish), this protein is Ubiquitin-conjugating enzyme E2 Z (ube2z).